The following is a 38-amino-acid chain: Defensin (38 aa).

Intrachain disulfides connect Cys4/Cys26, Cys11/Cys34, and Cys15/Cys36.

It belongs to the invertebrate defensin family. Type 2 subfamily.

The protein localises to the secreted. In terms of biological role, mediates the inducible antibacterial activity in larvae of A.cyanea. This Aeshna cyanea (Southern hawker dragonfly) protein is Defensin.